Here is a 416-residue protein sequence, read N- to C-terminus: Chromate transport protein (416 aa).

A disordered region spans residues 1 to 21 (MSVANEESYRPSKATDATTEA). The next 11 membrane-spanning stretches (helical) occupy residues 99 to 119 (LGGVLAGLGFMLPGFLLMFAL), 128 to 148 (FVGTALGAAFLGVQAAVIALI), 160 to 177 (LLDRWLWVIAIVCALAAI), 181 to 198 (DFWITLPAGGLVYALLVL), 204 to 224 (ALLVTLAAVALAAAVALWAAP), 237 to 257 (ASVLLIFASGLKAGLLTFGGA), 283 to 303 (LALSGVLPAPLIIFATFVGYV), 308 to 328 (IGAVAMTVGVFLPAFAFSLIF), 341 to 361 (LHAFLDGVAAGVVGLIGATTI), 371 to 391 (VPSLTVGMSIFAAGLAFLYAW), and 395 to 415 (LNVVVVILAAGLAGWLVFPNQ).

The protein belongs to the chromate ion transporter (CHR) (TC 2.A.51) family.

Its subcellular location is the cell inner membrane. This protein reduces chromate accumulation and is essential for chromate resistance. This chain is Chromate transport protein, found in Pseudomonas aeruginosa.